A 355-amino-acid polypeptide reads, in one-letter code: Glucose-6-phosphatase 2 (355 aa).

Residues 1 to 24 (MDFLHRSGVLIIHHLQEDYRTYYG) are Lumenal-facing. A helical membrane pass occupies residues 25 to 45 (FLNFMSNVGDPRNIFSIYFPL). Over 46-56 (WFQLNQNVGTK) the chain is Cytoplasmic. Residues 57–77 (MIWVAVIGDWFNLIFKWILFG) form a helical membrane-spanning segment. The Lumenal portion of the chain corresponds to 78-115 (HRPYWWIQETEIYPNHSSPCLEQFPTTCETGPGSPSGH). Arg79 is a substrate binding site. N-linked (GlcNAc...) asparagine glycosylation occurs at Asn92. The active-site Proton donor is the His115. A helical transmembrane segment spans residues 116-136 (AMGSSCVWYVMVTAALSYTIS). The Cytoplasmic portion of the chain corresponds to 137-146 (RMEESSVTLH). Residues 147–167 (RLTWSFLWSVFWLIQISVCIS) form a helical membrane-spanning segment. A topological domain (lumenal) is located at residue Arg168. Substrate is bound at residue Arg168. Residues 169–189 (VFIATHFPHQVILGVIGGMLV) form a helical membrane-spanning segment. The active-site Nucleophile is His174. Topologically, residues 190-211 (AEAFEHTPGVHMASLSVYLKTN) are cytoplasmic. A helical transmembrane segment spans residues 212-232 (VFLFLFALGFYLLLRLFGIDL). Residues 233-252 (LWSVPIAKKWCANPDWIHID) are Lumenal-facing. Residues 253-273 (STPFAGLVRNLGVLFGLGFAI) form a helical membrane-spanning segment. Topologically, residues 274–290 (NSEMFLRSCQGENGTKP) are cytoplasmic. Residues 291 to 307 (SFRLLCALTSLTTMQLY) traverse the membrane as a helical segment. Residues 308–318 (RFIKIPTHAEP) are Lumenal-facing. A helical membrane pass occupies residues 319–339 (LFYLLSFCKSASIPLMVVALI). The Cytoplasmic portion of the chain corresponds to 340–355 (PYCVHMLMRPGDKKTK). The short motif at 352 to 355 (KKTK) is the Prevents secretion from ER element.

It belongs to the glucose-6-phosphatase family. In terms of processing, N-glycosylated; the non-glycosylated form is more unstable and is degraded through the proteasome. Specifically expressed in pancreatic islet cells, in particular those of beta-cell origin. Not detected in testis, kidney, muscle, liver, lung, spleen, brain, pituitary, gastric fundus or heart.

The protein localises to the endoplasmic reticulum membrane. It catalyses the reaction D-glucose 6-phosphate + H2O = D-glucose + phosphate. It functions in the pathway carbohydrate biosynthesis; gluconeogenesis. In terms of biological role, may hydrolyze glucose-6-phosphate to glucose in the endoplasmic reticulum. May be responsible for glucose production through glycogenolysis and gluconeogenesis. This Mus musculus (Mouse) protein is Glucose-6-phosphatase 2 (G6pc2).